The primary structure comprises 166 residues: Putative pre-16S rRNA nuclease (166 aa).

Belongs to the YqgF nuclease family.

It is found in the cytoplasm. In terms of biological role, could be a nuclease involved in processing of the 5'-end of pre-16S rRNA. This chain is Putative pre-16S rRNA nuclease, found in Mesorhizobium japonicum (strain LMG 29417 / CECT 9101 / MAFF 303099) (Mesorhizobium loti (strain MAFF 303099)).